The primary structure comprises 404 residues: Indole-3-acetate O-methyltransferase 1 (404 aa).

Residues 82 to 83, Asn-88, Asp-120, 169 to 171, and 186 to 188 contribute to the S-adenosyl-L-methionine site; these read GC, TFY, and TFS. Mg(2+)-binding residues include Asn-208, Val-212, Arg-294, Asp-295, Phe-297, and Asn-298.

It belongs to the methyltransferase superfamily. SABATH family. In terms of assembly, homodimer. Mg(2+) serves as cofactor. Expressed in roots and panicles.

It catalyses the reaction (indol-3-yl)acetate + S-adenosyl-L-methionine = methyl (indol-3-yl)acetate + S-adenosyl-L-homocysteine. In terms of biological role, catalyzes the methylation of the free carboxyl end of the plant hormone indole-3-acetic acid (IAA). Converts IAA to IAA methyl ester (MeIAA). Regulates IAA activities by IAA methylation. Methylation of IAA plays an important role in regulating plant development and auxin homeostasis. MeIAA seems to be an inactive form of IAA. The sequence is that of Indole-3-acetate O-methyltransferase 1 (IAMT1) from Oryza sativa subsp. japonica (Rice).